The primary structure comprises 526 residues: Vang-like protein 2 (526 aa).

The segment at Met1 to Glu95 is disordered. The Cytoplasmic portion of the chain corresponds to Met1–Gly109. Residues Ser15–Lys33 show a composition bias toward basic residues. Basic and acidic residues-rich tracts occupy residues Ser34–Lys43 and Glu58–Asn68. Positions Gly70–Ser83 are enriched in low complexity. The span at Val84–Glu95 shows a compositional bias: basic and acidic residues. A helical membrane pass occupies residues Pro110–Leu130. Residues Pro131–Gly148 are Extracellular-facing. The chain crosses the membrane as a helical span at residues Leu149 to Leu169. Residues Arg170–Arg178 lie on the Cytoplasmic side of the membrane. A helical transmembrane segment spans residues Phe179–Leu199. The Extracellular segment spans residues Phe200–Gly215. A helical transmembrane segment spans residues Ile216–Val236. The Cytoplasmic portion of the chain corresponds to Leu237–Val526. Residues Glu523–Val526 carry the PDZ-binding motif.

The protein belongs to the Vang family. Interacts with the PDZ domain of dvl2/dsh. In terms of tissue distribution, ubiquitously expressed at the 4-cell stage. In early somitogenesis, becomes more abundant in anterior neural tissue where expression is seen in the neural tube but not in the notochord.

It is found in the cell membrane. In terms of biological role, plays a role in non-canonical Wnt/planar cell polarity (PCP) signaling to regulate convergent extension cell movements during gastrulation. Acts together with scrib and prickle1 and localizes prickle1 and dvl2/dsh to the plasma membrane. Has an overlapping role with kny during both convergent extension and eye development. In the eye, involved in establishing proper alignment of the anterior neural plate and midline cells expressing shha and shhb/twhh. Has indirect effects on a number of other developmental processes including notochord shape formation, neural progenitor cell morphogenesis, segregation of somites and adaxial cell development. Together with prickle1, required for the posterior (caudal) movement of branchiomotor neurons in the hindbrain independently of, and a few hours after, convergent extension. May be required for cell surface localization of fzd3 and fzd6 in the inner ear. The polypeptide is Vang-like protein 2 (Danio rerio (Zebrafish)).